The chain runs to 162 residues: Corticoliberin-1 (162 aa).

An N-terminal signal peptide occupies residues 1–24 (MKLNFLVTTVALLVAFPPPYECRA). A propeptide spanning residues 25–119 (IDSSSNQPAT…ALDSEERERR (95 aa)) is cleaved from the precursor. At Phe-160 the chain carries Phenylalanine amide.

It belongs to the sauvagine/corticotropin-releasing factor/urotensin I family.

It localises to the secreted. Its function is as follows. This hormone from hypothalamus regulates the release of corticotropin from pituitary gland. This Catostomus commersonii (White sucker) protein is Corticoliberin-1 (crf1).